A 370-amino-acid polypeptide reads, in one-letter code: Proto-oncogene Wnt-1 (370 aa).

Residues 1 to 27 (MGLWALLPGWVSATLLLALAALPAALA) form the signal peptide. N-linked (GlcNAc...) asparagine glycosylation occurs at Asn-29. Disulfide bonds link Cys-93-Cys-104, Cys-143-Cys-151, Cys-153-Cys-170, Cys-218-Cys-232, Cys-220-Cys-227, Cys-299-Cys-330, Cys-315-Cys-325, Cys-329-Cys-369, Cys-345-Cys-360, Cys-347-Cys-357, and Cys-352-Cys-353. Ser-224 is lipidated: O-palmitoleoyl serine; by PORCN. N-linked (GlcNAc...) asparagine glycosylation is found at Asn-316 and Asn-346. Residue Asn-359 is glycosylated (N-linked (GlcNAc...) asparagine).

Belongs to the Wnt family. As to quaternary structure, forms a soluble 1:1 complex with AFM; this prevents oligomerization and is required for prolonged biological activity. The complex with AFM may represent the physiological form in body fluids. Interacts with PORCN. Interacts with RSPO1, RSPO2 and RSPO3. Interacts with WLS. Post-translationally, palmitoleoylation is required for efficient binding to frizzled receptors. Palmitoleoylation is necessary for proper trafficking to cell surface. Depalmitoleoylated by NOTUM, leading to inhibit Wnt signaling pathway.

It localises to the secreted. The protein localises to the extracellular space. It is found in the extracellular matrix. Functionally, ligand for members of the frizzled family of seven transmembrane receptors. Acts in the canonical Wnt signaling pathway by promoting beta-catenin-dependent transcriptional activation. In some developmental processes, is also a ligand for the coreceptor RYK, thus triggering Wnt signaling. Plays an essential role in the development of the embryonic brain and central nervous system (CNS). Has a role in osteoblast function, bone development and bone homeostasis. This chain is Proto-oncogene Wnt-1 (WNT1), found in Homo sapiens (Human).